Consider the following 60-residue polypeptide: Large ribosomal subunit protein uL30 (60 aa).

The protein belongs to the universal ribosomal protein uL30 family. Part of the 50S ribosomal subunit.

The chain is Large ribosomal subunit protein uL30 from Idiomarina loihiensis (strain ATCC BAA-735 / DSM 15497 / L2-TR).